We begin with the raw amino-acid sequence, 411 residues long: Na(+)-translocating NADH-quinone reductase subunit F (411 aa).

A helical membrane pass occupies residues 6–26 (AIGGVAMFTLIIMSFVAIILA). The 2Fe-2S ferredoxin-type domain maps to 35-129 (GDVTIHINDN…DMKIEIDPEF (95 aa)). 4 residues coordinate [2Fe-2S] cluster: cysteine 72, cysteine 78, cysteine 81, and cysteine 113. The region spanning 132–273 (VQKWECEVIS…SGPYGEFFAK (142 aa)) is the FAD-binding FR-type domain.

Belongs to the NqrF family. In terms of assembly, composed of six subunits; NqrA, NqrB, NqrC, NqrD, NqrE and NqrF. [2Fe-2S] cluster is required as a cofactor. Requires FAD as cofactor.

The protein resides in the cell inner membrane. The enzyme catalyses a ubiquinone + n Na(+)(in) + NADH + H(+) = a ubiquinol + n Na(+)(out) + NAD(+). Its function is as follows. NQR complex catalyzes the reduction of ubiquinone-1 to ubiquinol by two successive reactions, coupled with the transport of Na(+) ions from the cytoplasm to the periplasm. The first step is catalyzed by NqrF, which accepts electrons from NADH and reduces ubiquinone-1 to ubisemiquinone by a one-electron transfer pathway. In Psychrobacter arcticus (strain DSM 17307 / VKM B-2377 / 273-4), this protein is Na(+)-translocating NADH-quinone reductase subunit F.